We begin with the raw amino-acid sequence, 493 residues long: tRNA-2-methylthio-N(6)-dimethylallyladenosine synthase (493 aa).

Positions 1 to 14 are enriched in polar residues; sequence MPMTGLLQTTLSTA. The tract at residues 1-31 is disordered; that stretch reads MPMTGLLQTTLSTADQDRSGPAATTGDTPAR. In terms of domain architecture, MTTase N-terminal spans 35–155; that stretch reads KRLHVITWGC…LGGMVRRAMN (121 aa). [4Fe-4S] cluster is bound by residues Cys44, Cys80, Cys118, Cys199, Cys203, and Cys206. Positions 185 to 417 constitute a Radical SAM core domain; it reads LAGGRTAFLT…QALLRTQQEA (233 aa). The TRAM domain maps to 420 to 482; the sequence is TACIGKTVNV…TNSLSATLPD (63 aa).

It belongs to the methylthiotransferase family. MiaB subfamily. Monomer. [4Fe-4S] cluster serves as cofactor.

It is found in the cytoplasm. It carries out the reaction N(6)-dimethylallyladenosine(37) in tRNA + (sulfur carrier)-SH + AH2 + 2 S-adenosyl-L-methionine = 2-methylsulfanyl-N(6)-dimethylallyladenosine(37) in tRNA + (sulfur carrier)-H + 5'-deoxyadenosine + L-methionine + A + S-adenosyl-L-homocysteine + 2 H(+). Functionally, catalyzes the methylthiolation of N6-(dimethylallyl)adenosine (i(6)A), leading to the formation of 2-methylthio-N6-(dimethylallyl)adenosine (ms(2)i(6)A) at position 37 in tRNAs that read codons beginning with uridine. The polypeptide is tRNA-2-methylthio-N(6)-dimethylallyladenosine synthase (Granulibacter bethesdensis (strain ATCC BAA-1260 / CGDNIH1)).